The primary structure comprises 372 residues: Probable dual-specificity RNA methyltransferase RlmN (372 aa).

The Proton acceptor role is filled by Glu106. The Radical SAM core domain occupies 112–359; sequence YPQRNTVCIS…SCTVRDTRGR (248 aa). A disulfide bridge connects residues Cys119 and Cys365. 3 residues coordinate [4Fe-4S] cluster: Cys126, Cys130, and Cys133. S-adenosyl-L-methionine contacts are provided by residues 186–187, Ser220, 243–245, and Asn322; these read GE and SLH. Cys365 functions as the S-methylcysteine intermediate in the catalytic mechanism.

This sequence belongs to the radical SAM superfamily. RlmN family. [4Fe-4S] cluster is required as a cofactor.

The protein resides in the cytoplasm. The enzyme catalyses adenosine(2503) in 23S rRNA + 2 reduced [2Fe-2S]-[ferredoxin] + 2 S-adenosyl-L-methionine = 2-methyladenosine(2503) in 23S rRNA + 5'-deoxyadenosine + L-methionine + 2 oxidized [2Fe-2S]-[ferredoxin] + S-adenosyl-L-homocysteine. The catalysed reaction is adenosine(37) in tRNA + 2 reduced [2Fe-2S]-[ferredoxin] + 2 S-adenosyl-L-methionine = 2-methyladenosine(37) in tRNA + 5'-deoxyadenosine + L-methionine + 2 oxidized [2Fe-2S]-[ferredoxin] + S-adenosyl-L-homocysteine. Functionally, specifically methylates position 2 of adenine 2503 in 23S rRNA and position 2 of adenine 37 in tRNAs. The sequence is that of Probable dual-specificity RNA methyltransferase RlmN from Mycolicibacterium smegmatis (strain ATCC 700084 / mc(2)155) (Mycobacterium smegmatis).